The sequence spans 447 residues: N-succinylarginine dihydrolase (447 aa).

Substrate is bound by residues alanine 19–serine 28, asparagine 110, and histidine 137–arginine 138. Glutamate 174 is a catalytic residue. Arginine 212 provides a ligand contact to substrate. Histidine 248 is a catalytic residue. Residues aspartate 250 and asparagine 359 each contribute to the substrate site. Residue cysteine 365 is the Nucleophile of the active site.

The protein belongs to the succinylarginine dihydrolase family. In terms of assembly, homodimer.

It catalyses the reaction N(2)-succinyl-L-arginine + 2 H2O + 2 H(+) = N(2)-succinyl-L-ornithine + 2 NH4(+) + CO2. The protein operates within amino-acid degradation; L-arginine degradation via AST pathway; L-glutamate and succinate from L-arginine: step 2/5. In terms of biological role, catalyzes the hydrolysis of N(2)-succinylarginine into N(2)-succinylornithine, ammonia and CO(2). The protein is N-succinylarginine dihydrolase of Salmonella arizonae (strain ATCC BAA-731 / CDC346-86 / RSK2980).